The chain runs to 427 residues: Glutamate-1-semialdehyde 2,1-aminomutase (427 aa).

Residue K265 is modified to N6-(pyridoxal phosphate)lysine.

The protein belongs to the class-III pyridoxal-phosphate-dependent aminotransferase family. HemL subfamily. Homodimer. It depends on pyridoxal 5'-phosphate as a cofactor.

The protein resides in the cytoplasm. It carries out the reaction (S)-4-amino-5-oxopentanoate = 5-aminolevulinate. It participates in porphyrin-containing compound metabolism; protoporphyrin-IX biosynthesis; 5-aminolevulinate from L-glutamyl-tRNA(Glu): step 2/2. This is Glutamate-1-semialdehyde 2,1-aminomutase from Teredinibacter turnerae (strain ATCC 39867 / T7901).